A 335-amino-acid chain; its full sequence is Tyrosine-protein phosphatase 1 (335 aa).

The region spanning 15-328 is the Tyrosine-protein phosphatase domain; the sequence is LLGKFKFIQN…LFIYHAAKYL (314 aa). Residue Ser-83 is modified to Phosphoserine; by CLK1. The active-site Phosphocysteine intermediate is Cys-252.

It belongs to the protein-tyrosine phosphatase family. Non-receptor class subfamily. In terms of processing, activated by phosphorylation at Ser-83.

The protein localises to the cytoplasm. The enzyme catalyses O-phospho-L-tyrosyl-[protein] + H2O = L-tyrosyl-[protein] + phosphate. Functionally, is not required for vegetative growth. The chain is Tyrosine-protein phosphatase 1 (PTP1) from Saccharomyces cerevisiae (strain ATCC 204508 / S288c) (Baker's yeast).